Here is a 198-residue protein sequence, read N- to C-terminus: Large ribosomal subunit protein uL24c (198 aa).

The N-terminal 50 residues, 1-50 (MATMSALQSSFTSLSLSPSSSFLGQRLISPISLSVTSPVKPAENPCLVLA), are a transit peptide targeting the chloroplast.

This sequence belongs to the universal ribosomal protein uL24 family. As to quaternary structure, part of the 50S ribosomal subunit.

It localises to the plastid. Its subcellular location is the chloroplast. Functionally, one of two assembly initiator proteins, it binds directly to the 5'-end of the 23S rRNA, where it nucleates assembly of the 50S subunit. Required for optimal plastid performance in terms of photosynthesis and growth. Required for the translation of plastid mRNAs. Plays a critical role in biosynthesis of thylakoid membrane proteins encoded by chloroplast genes. The sequence is that of Large ribosomal subunit protein uL24c (RPL24) from Arabidopsis thaliana (Mouse-ear cress).